Here is a 264-residue protein sequence, read N- to C-terminus: 3-methyl-2-oxobutanoate hydroxymethyltransferase (264 aa).

Residues D45 and D84 each coordinate Mg(2+). 3-methyl-2-oxobutanoate-binding positions include 45–46, D84, and K112; that span reads DS. Residue E114 coordinates Mg(2+). E181 serves as the catalytic Proton acceptor.

Belongs to the PanB family. In terms of assembly, homodecamer; pentamer of dimers. Requires Mg(2+) as cofactor.

Its subcellular location is the cytoplasm. The catalysed reaction is 3-methyl-2-oxobutanoate + (6R)-5,10-methylene-5,6,7,8-tetrahydrofolate + H2O = 2-dehydropantoate + (6S)-5,6,7,8-tetrahydrofolate. The protein operates within cofactor biosynthesis; (R)-pantothenate biosynthesis; (R)-pantoate from 3-methyl-2-oxobutanoate: step 1/2. Catalyzes the reversible reaction in which hydroxymethyl group from 5,10-methylenetetrahydrofolate is transferred onto alpha-ketoisovalerate to form ketopantoate. In Edwardsiella ictaluri (strain 93-146), this protein is 3-methyl-2-oxobutanoate hydroxymethyltransferase.